A 246-amino-acid chain; its full sequence is Probable transcriptional regulatory protein CLJ_B3338 (246 aa).

Belongs to the TACO1 family.

The protein resides in the cytoplasm. The protein is Probable transcriptional regulatory protein CLJ_B3338 of Clostridium botulinum (strain 657 / Type Ba4).